Here is a 142-residue protein sequence, read N- to C-terminus: Large ribosomal subunit protein uL11 (142 aa).

This sequence belongs to the universal ribosomal protein uL11 family. In terms of assembly, part of the ribosomal stalk of the 50S ribosomal subunit. Interacts with L10 and the large rRNA to form the base of the stalk. L10 forms an elongated spine to which L12 dimers bind in a sequential fashion forming a multimeric L10(L12)X complex. One or more lysine residues are methylated.

In terms of biological role, forms part of the ribosomal stalk which helps the ribosome interact with GTP-bound translation factors. This chain is Large ribosomal subunit protein uL11, found in Yersinia pseudotuberculosis serotype O:1b (strain IP 31758).